Reading from the N-terminus, the 116-residue chain is Non-specific lipid-transfer protein AP10 (116 aa).

An N-terminal signal peptide occupies residues 1 to 26 (MKGTSMGVAILAMIVMAQLMVHPSVA). 4 cysteine pairs are disulfide-bonded: Cys29/Cys76, Cys39/Cys53, Cys54/Cys98, and Cys74/Cys112.

Belongs to the plant LTP family. In germinating seeds, detected in the entire surface of the cotyledons, shoot meristem, inter-cotyledon space, primary xylem and immature vascular elements (at protein level). Expressed in seeds, but not the aerial parts of the plant.

Its subcellular location is the secreted. It localises to the extracellular space. The protein resides in the membrane. Its function is as follows. Plant non-specific lipid-transfer proteins transfer phospholipids as well as galactolipids across membranes. May play a role in wax or cutin deposition in the cell walls of expanding epidermal cells and certain secretory tissues. Permeabilizes the membrane of fungal spores, inhibits germination of the spores of the fungus F.solani at a concentration of 40 ug/ml. Inhibits the growth of F.solani with an IC(50) of 6.5 ug/ml, weakly inhibits the growth of the fungus A.alternata. Binds oleoyl-CoA. The polypeptide is Non-specific lipid-transfer protein AP10 (Helianthus annuus (Common sunflower)).